Here is a 988-residue protein sequence, read N- to C-terminus: Kinesin-like protein CIN8 (988 aa).

The Kinesin motor domain maps to 33–470 (NILVAVRCRG…LEYASKAKNI (438 aa)). 125–132 (GMTSTGKT) is a binding site for ATP. Residues 206-301 (FDSNVNGTSA…NSNNTNQQQS (96 aa)) form a disordered region. Residues 208 to 237 (SNVNGTSASGSSSRSSSRNNSPRSAPDNSR) show a composition bias toward low complexity. Positions 248–280 (HNTTGNSKISNNNHNKFSRFKQTSQESTRAHAS) are enriched in polar residues. The segment covering 281-301 (NNHQNVHIPNNNSNNTNQQQS) has biased composition (low complexity). 2 coiled-coil regions span residues 514–619 (EHYK…ELQQ) and 707–769 (KLAE…MQNF). Residues 965–974 (ALQEKRKPED) are compositionally biased toward basic and acidic residues. A disordered region spans residues 965–988 (ALQEKRKPEDEVLLQAKLQRRNPD).

This sequence belongs to the TRAFAC class myosin-kinesin ATPase superfamily. Kinesin family. BimC subfamily.

It is found in the cytoplasm. The protein localises to the cytoskeleton. The protein resides in the spindle. Its function is as follows. Elongates the mitotic spindle by interacting with spindle microtubules to generate an outward force pushing spindle poles apart. Following spindle assembly, CIN8 and KIP1 apparently act to oppose a force, possibly generated by KAR3, that draws separated poles back together. The protein is Kinesin-like protein CIN8 (CIN8) of Candida glabrata (strain ATCC 2001 / BCRC 20586 / JCM 3761 / NBRC 0622 / NRRL Y-65 / CBS 138) (Yeast).